Reading from the N-terminus, the 193-residue chain is Ion-translocating oxidoreductase complex subunit A (193 aa).

Transmembrane regions (helical) follow at residues 4 to 24 (FLLV…KFLG), 39 to 59 (IGMG…CWLV), 71 to 91 (FLRI…IETV), 102 to 122 (ALGI…LPLM), 134 to 154 (TLSG…FAGM), and 171 to 191 (PIAF…AGLV).

This sequence belongs to the NqrDE/RnfAE family. In terms of assembly, the complex is composed of six subunits: RnfA, RnfB, RnfC, RnfD, RnfE and RnfG.

It localises to the cellular chromatophore membrane. Part of a membrane-bound complex that couples electron transfer with translocation of ions across the membrane. Required for nitrogen fixation. Involved in electron transfer to nitrogenase. This Rhodobacter capsulatus (Rhodopseudomonas capsulata) protein is Ion-translocating oxidoreductase complex subunit A.